Here is a 145-residue protein sequence, read N- to C-terminus: uncharacterized protein (145 aa).

A helical transmembrane segment spans residues Val16 to Ile36.

The protein resides in the mitochondrion membrane. This is an uncharacterized protein from Arabidopsis thaliana (Mouse-ear cress).